A 114-amino-acid chain; its full sequence is Iron-sulfur cluster insertion protein ErpA (114 aa).

Residues cysteine 42, cysteine 106, and cysteine 108 each coordinate iron-sulfur cluster.

This sequence belongs to the HesB/IscA family. In terms of assembly, homodimer. The cofactor is iron-sulfur cluster.

In terms of biological role, required for insertion of 4Fe-4S clusters for at least IspG. This chain is Iron-sulfur cluster insertion protein ErpA, found in Edwardsiella ictaluri (strain 93-146).